The following is a 658-amino-acid chain: Exoribonuclease 2 (658 aa).

In terms of domain architecture, RNB spans 189-530 (REDLTSLYFT…VNHRLIKQVL (342 aa)). The region spanning 576 to 658 (AVEFDCEIAD…ETRSIVGNII (83 aa)) is the S1 motif domain.

It belongs to the RNR ribonuclease family. RNase II subfamily.

Its subcellular location is the cytoplasm. It carries out the reaction Exonucleolytic cleavage in the 3'- to 5'-direction to yield nucleoside 5'-phosphates.. Its function is as follows. Involved in mRNA degradation. Hydrolyzes single-stranded polyribonucleotides processively in the 3' to 5' direction. The polypeptide is Exoribonuclease 2 (Actinobacillus pleuropneumoniae serotype 7 (strain AP76)).